The chain runs to 882 residues: Valine--tRNA ligase (882 aa).

Positions 45–55 (PNVTGKLHLGH) match the 'HIGH' region motif. Residues 519-523 (KMSKS) carry the 'KMSKS' region motif. Lysine 522 lines the ATP pocket. A coiled-coil region spans residues 808–882 (LADLLNVEEE…RIAEMHKLVK (75 aa)).

Belongs to the class-I aminoacyl-tRNA synthetase family. ValS type 1 subfamily. Monomer.

It localises to the cytoplasm. The catalysed reaction is tRNA(Val) + L-valine + ATP = L-valyl-tRNA(Val) + AMP + diphosphate. In terms of biological role, catalyzes the attachment of valine to tRNA(Val). As ValRS can inadvertently accommodate and process structurally similar amino acids such as threonine, to avoid such errors, it has a 'posttransfer' editing activity that hydrolyzes mischarged Thr-tRNA(Val) in a tRNA-dependent manner. This Streptococcus pyogenes serotype M18 (strain MGAS8232) protein is Valine--tRNA ligase.